A 701-amino-acid chain; its full sequence is Polyribonucleotide nucleotidyltransferase (701 aa).

Mg(2+) is bound by residues aspartate 487 and aspartate 493. Residues 554 to 613 (PTMIAMKIDTDKIRDVIGKGGATIRAICEETKASIDIEDDGSIKIFGETKEAADAAKQRI) enclose the KH domain. An S1 motif domain is found at 623–691 (GKIYVGKVER…NRGRIKLSIK (69 aa)).

It belongs to the polyribonucleotide nucleotidyltransferase family. In terms of assembly, component of the RNA degradosome, which is a multiprotein complex involved in RNA processing and mRNA degradation. The cofactor is Mg(2+).

The protein localises to the cytoplasm. It catalyses the reaction RNA(n+1) + phosphate = RNA(n) + a ribonucleoside 5'-diphosphate. In terms of biological role, involved in mRNA degradation. Catalyzes the phosphorolysis of single-stranded polyribonucleotides processively in the 3'- to 5'-direction. The polypeptide is Polyribonucleotide nucleotidyltransferase (Pseudomonas entomophila (strain L48)).